A 232-amino-acid chain; its full sequence is tRNA (guanine-N(1)-)-methyltransferase (232 aa).

S-adenosyl-L-methionine contacts are provided by residues Gly112 and 132-137 (IGDYIL).

This sequence belongs to the RNA methyltransferase TrmD family. As to quaternary structure, homodimer.

The protein localises to the cytoplasm. The enzyme catalyses guanosine(37) in tRNA + S-adenosyl-L-methionine = N(1)-methylguanosine(37) in tRNA + S-adenosyl-L-homocysteine + H(+). Specifically methylates guanosine-37 in various tRNAs. The sequence is that of tRNA (guanine-N(1)-)-methyltransferase from Methylacidiphilum infernorum (isolate V4) (Methylokorus infernorum (strain V4)).